The chain runs to 1129 residues: A-kinase anchor protein 11 (1129 aa).

The span at 1–12 (MQKMQCHLRRPL) shows a compositional bias: basic residues. The interval 1–21 (MQKMQCHLRRPLHSSSSFSSQ) is disordered. T251 and T363 each carry phosphothreonine. Disordered stretches follow at residues 354-376 (IRDR…QTSS), 394-416 (EFAP…SENE), and 434-455 (SEEV…SEHS). Polar residues predominate over residues 404–416 (PHNSSVGSLSENE). Phosphoserine occurs at positions 434, 439, and 440. Positions 442–455 (GEEHPEMDVKSEHS) are enriched in basic and acidic residues. S595 is modified (phosphoserine). The residue at position 742 (T742) is a Phosphothreonine. The residue at position 835 (S835) is a Phosphoserine. The interval 905–918 (LAEKIVAEAIEKAE) is PKA-RII binding region. Residues 962-1061 (SKEVEDFQST…QEDGAEGLQP (100 aa)) form a disordered region. Residues 968–995 (FQSTESLGSQQMNLSVGEDSTGSWSNLS) are compositionally biased toward polar residues. Residues 1002 to 1011 (DESSSFHHLS) are compositionally biased toward basic and acidic residues. Residues 1012–1028 (ESSNGNSSSWSSLGLEG) are compositionally biased toward low complexity. Residues 1033-1042 (NNLSFPTSDS) show a composition bias toward polar residues. Positions 1043 to 1056 (DGPDDRESEQEDGA) are enriched in acidic residues.

In terms of tissue distribution, expressed in brain and testis.

Its subcellular location is the peroxisome. Binds to type II regulatory subunits of protein kinase A and anchors/targets them. This Rattus norvegicus (Rat) protein is A-kinase anchor protein 11 (Akap11).